The chain runs to 238 residues: Ribonuclease PH (238 aa).

Phosphate-binding positions include arginine 86 and 124–126; that span reads GTR.

The protein belongs to the RNase PH family. Homohexameric ring arranged as a trimer of dimers.

It carries out the reaction tRNA(n+1) + phosphate = tRNA(n) + a ribonucleoside 5'-diphosphate. Functionally, phosphorolytic 3'-5' exoribonuclease that plays an important role in tRNA 3'-end maturation. Removes nucleotide residues following the 3'-CCA terminus of tRNAs; can also add nucleotides to the ends of RNA molecules by using nucleoside diphosphates as substrates, but this may not be physiologically important. Probably plays a role in initiation of 16S rRNA degradation (leading to ribosome degradation) during starvation. This Psychrobacter cryohalolentis (strain ATCC BAA-1226 / DSM 17306 / VKM B-2378 / K5) protein is Ribonuclease PH.